The primary structure comprises 245 residues: Polyhedrin (245 aa).

Belongs to the polyhedrin family.

Major component of the virus occlusion bodies, which are large proteinaceous structures (polyhedra), that protect the virus from the outside environment for extended periods until they are ingested by insect larvae. In Lepidoptera (butterflies and moths), this protein is Polyhedrin.